Here is a 148-residue protein sequence, read N- to C-terminus: Flagellar assembly factor FliW (148 aa).

The protein belongs to the FliW family. As to quaternary structure, interacts with translational regulator CsrA and flagellin(s).

It localises to the cytoplasm. In terms of biological role, acts as an anti-CsrA protein, binds CsrA and prevents it from repressing translation of its target genes, one of which is flagellin. Binds to flagellin and participates in the assembly of the flagellum. This is Flagellar assembly factor FliW from Ruminiclostridium cellulolyticum (strain ATCC 35319 / DSM 5812 / JCM 6584 / H10) (Clostridium cellulolyticum).